The following is a 445-amino-acid chain: GTPase Der (445 aa).

EngA-type G domains follow at residues P3–D167 and I180–N353. GTP is bound by residues G9–S16, D56–F60, N119–E122, G186–S193, D233–L237, and N298–D301. The region spanning R354–V438 is the KH-like domain.

The protein belongs to the TRAFAC class TrmE-Era-EngA-EngB-Septin-like GTPase superfamily. EngA (Der) GTPase family. As to quaternary structure, associates with the 50S ribosomal subunit.

Functionally, GTPase that plays an essential role in the late steps of ribosome biogenesis. This chain is GTPase Der, found in Polaromonas naphthalenivorans (strain CJ2).